Reading from the N-terminus, the 2562-residue chain is MATLNSASPSGTVPSPGHNVRSPPPETSSSSTSDPVTKDPPDAPSTSESIRSSEPGGERLESGSDLDPPKEIGEPQEEPGCGHIPPKDLGVAKEEEEILPLDLSSHLFFAAGGQAYLLANLPLPRGSELSLPKGFPWDEASAKEEPSLPLLTHFPSSHLTTLHIQHGFDPIQGFSSSDQMLSHDTSAPSLAACERRDGSFWSYQLVPNPTEDPKDGPLGSRREDHRAMFWICLLCRLGFGRLQTFIGHTLSHGVKLSPAHHQGLLGSPAVLQEGHDGGMALLSFLEPKFLTRPSPEVPDTSTVTVKTNGAQAEDGPPEADGQALVLPAEEVIALSPPSPPTALATWDPSPTQAKDSPVPRGEAGPDWFPEGQEEDGGLCLPLNQSSPTSKEVAVLPAPAGSPEDTSDPPPSCRLADDYTPAPAAFQGLSLSSHMSLLHSRNSCKTLKCPKCNWHYKYQQTLDVHMREKHPESNSHCSYCSAGGAHPRLARGESYNCGYKPYRCDVCNYSTTTKGNLSIHMQSDKHLANLQGFQAGPGGQASPPEASLPPTSVGDKEPKTKSSWQCKVCSYETNISRNLRIHMTSEKHMQNVLMLHQGLPLGLPPGLVGPGPPPPPGAAPTNPPELFQYFGPQALGQPQTPMPGPGLRPDKPLEAQLLLNGFHHLGAPARKFPTAAPGSLSPETHLPPSQLLGSSSDGLPTSPSPDDSPALKVFRCLVCQAFSTDSLELLLYHCSIGRSLPEAEWKEVAGDTHRCKLCCYGTQLKANFQLHLKTDKHTQKYQLAAHLREGGGAMGTPSLLALGDGASYGSISPLHLRCNICDFESNSKEKMQLHTRGSAHEENSQIYKFLLEMEGAEAGPEPGLYHCLLCAWDTPSRLALLQHLRTPAHRDAQAQRRLQLLQNGPAAEEGLSALQSILSFSHGRLQTPGKASDTPLAQPPTSEKDAQNKTEQQASEVTEDRSGPPRDSANQITVFCCPYCSFLSPECDQVRVHTLSQHAVQPKYRCPLCQEQLVGRPALHFHLSHLHNVVPECVEKLLLVATTVEMTFATKMLPGPTLNPVEDGLDHPAPGAEPTPNRDQVAESSNLAPEVSPDPPLEPPLAPVEGSREPSESPDQPPSPAPSPAPRLDAQVEELAPLPTMSEEEEGAMGEPRSAEPTPADSRHPLTYRKTTNFALDKFLDPARPYKCTVCKESFTQKNILLVHYNSVSHLHKMKKAAIDPSGPARGEAGIPPPAATASDKPFKCTVCRVSYNQSSTLEIHMRSVLHQTRSRGAKIDARAEGAERGQEEFKEGETEGEAGTEKKGPDPGGFMSGLPFLSPPPPPLDLHRFSAPLFTPPVLPPFPLVPESLLKLQQQQLLLPFYLHDLKVGPKLALASPTPMLSLPAANPPPLPAPPKAELAEQEWERPLMAEEGTEAGPSSPTHTSPNEAARTAAKALLENFGFELVIQYNEGKQAVPPPPTPPPPESLGGGDKLACGACGKLFSNMLILKTHEEHVHRRFLPFEALSRYAAQFRKSYDSLYPPPVEPPKPPDGCLESPPQLGPPFVVPEPEVGGIHTSEERSLSGGGPWPSEEEEGSRGSLPPAVPVGRRFSRTKFTEFQTQALQSFFETSAYPKDGEVERLASLLGLASRVVVVWFQNARQKARKNACEGGPVTAGGASGGASGCRRCHATFACVFELVRHLKKCYDDQPPEEEEEAERGEEEEEVEEEEAEERNLEPAAARPGGPSPEHADGEDLSQTEPTRPESKESEGKAPPSPPVYACDQCAASFPSQDLLTTHHRLHLLPSVQPSAPPPSQLLDLPLLVFGERNPVVSGTSSVTGTPLKRKHDDGSLSPTGSEAGGGGEGEPPKDKRLRTTILPEQLEILYRWYMQDSNPTRKMLDCISEEVGLKKRVVQVWFQNTRARERKGQFRSTPGGVAGPAVKPTVPPSPAPFPKFNLLLSKIEDETGKEAPKRDAPAFPYPTVTPAVGPLPFLPPGKEAAVPTPEPPPPLPPPALSEDEGPEEPSKASPESEACSPSAGDLSDSSASSLAEPESPGAGGTSGGPGGGTGVPDSMGQRRYRTQMSSLQLKIMKACYEAYRTPTMQECEVLGEEIGLPKRVIQVWFQNARAKEKKAKLQGTAPPGSGGSSEGTSAAQRTDCPYCDVKYDFYVSCRGHLFSRQHLAKLKEAVRAQLKSESKCYDLAPAPETPLAPKGPPATTPASSVPLGASPTLPRLAPVLLPGPTLAQPPLGSIASFNSGPAASSGLLGLATSVLPATTVVQTAGPGRPLPQRPVSNQTNSSTDPTPGPATEPSGDKVSGERKPVATLPNSSTDALKNLKALKATVPALLGGQFLPFPLPPAGGAAPPAVFGPQLQGAYFQQLYGMKKGLFPMNPVIPQTLIGLLPNALLQQPPQAPEPTATAPPKPPELPASGEGESSEADELLTGSTGISTVDVTHRYLCRQCKMAFDGEAPATAHQRSFCFFGRGSGASMPAPLRVPICTYHCLACEVLLSGREALASHLRSSAHRRKAAPPPGGPPITVTNSATAVPAAVAFAKEEARLPHTDPNPKTTTTSTLLAL.

Positions 1 to 13 (MATLNSASPSGTV) are enriched in polar residues. 2 disordered regions span residues 1 to 88 (MATL…PPKD) and 337 to 410 (PSPP…DPPP). Basic and acidic residues predominate over residues 56–73 (GGERLESGSDLDPPKEIG). 2 consecutive C2H2-type zinc fingers follow at residues 446-469 (LKCP…REKH) and 501-525 (YRCD…SDKH). Disordered stretches follow at residues 530 to 559 (QGFQ…EPKT), 603 to 651 (PPGL…PDKP), and 669 to 705 (RKFP…PSPD). Residues 609 to 622 (PGPPPPPGAAPTNP) are compositionally biased toward pro residues. The segment covering 690-704 (LLGSSSDGLPTSPSP) has biased composition (polar residues). 3 C2H2-type zinc fingers span residues 752–776 (HRCK…TDKH), 815–839 (LRCN…GSAH), and 864–888 (YHCL…TPAH). Residues 923-966 (RLQTPGKASDTPLAQPPTSEKDAQNKTEQQASEVTEDRSGPPRD) form a disordered region. The segment at 1003–1026 (YRCPLCQEQLVGRPALHFHLSHLH) adopts a C2H2-type 6 zinc-finger fold. Disordered regions lie at residues 1058–1126 (NPVE…PAPR) and 1140–1166 (MSEE…HPLT). Composition is skewed to pro residues over residues 1091–1101 (SPDPPLEPPLA) and 1114–1124 (DQPPSPAPSPA). C2H2-type zinc fingers lie at residues 1185-1211 (YKCT…SHLH) and 1242-1266 (FKCT…SVLH). The segment covering 1278 to 1305 (RAEGAERGQEEFKEGETEGEAGTEKKGP) has biased composition (basic and acidic residues). The interval 1278–1313 (RAEGAERGQEEFKEGETEGEAGTEKKGPDPGGFMSG) is disordered. Residues 1474–1497 (LACGACGKLFSNMLILKTHEEHVH) form a C2H2-type 9 zinc finger. The segment at 1520–1584 (LYPPPVEPPK…EGSRGSLPPA (65 aa)) is disordered. Positions 1521 to 1531 (YPPPVEPPKPP) are enriched in pro residues. The homeobox 1 DNA-binding region spans 1589–1648 (RRFSRTKFTEFQTQALQSFFETSAYPKDGEVERLASLLGLASRVVVVWFQNARQKARKNA). A C2H2-type 10; degenerate zinc finger spans residues 1664 to 1687 (SGCRRCHATFACVFELVRHLKKCY). Positions 1689-1760 (DQPPEEEEEA…EGKAPPSPPV (72 aa)) are disordered. A compositionally biased stretch (acidic residues) spans 1690-1713 (QPPEEEEEAERGEEEEEVEEEEAE). The segment covering 1743-1752 (TRPESKESEG) has biased composition (basic and acidic residues). The C2H2-type 11 zinc-finger motif lies at 1761-1783 (YACDQCAASFPSQDLLTTHHRLH). Disordered stretches follow at residues 1814–1853 (SGTS…KDKR), 1907–1934 (RKGQ…PAPF), 1971–2057 (PLPF…DSMG), 2114–2136 (KKAK…TSAA), 2186–2210 (PAPE…PLGA), 2263–2313 (QTAG…PNSS), and 2391–2429 (LQQP…LTGS). The homeobox 2 DNA-binding region spans 1851 to 1910 (DKRLRTTILPEQLEILYRWYMQDSNPTRKMLDCISEEVGLKKRVVQVWFQNTRARERKGQ). Positions 1985-1996 (TPEPPPPLPPPA) are enriched in pro residues. A compositionally biased stretch (low complexity) spans 2008–2037 (KASPESEACSPSAGDLSDSSASSLAEPESP). Positions 2038-2051 (GAGGTSGGPGGGTG) are enriched in gly residues. A DNA-binding region (homeobox 3) is located at residues 2058–2117 (QRRYRTQMSSLQLKIMKACYEAYRTPTMQECEVLGEEIGLPKRVIQVWFQNARAKEKKAK). The span at 2188–2200 (PETPLAPKGPPAT) shows a compositional bias: pro residues. A compositionally biased stretch (polar residues) spans 2275 to 2286 (PVSNQTNSSTDP). Over residues 2295-2305 (SGDKVSGERKP) the composition is skewed to basic and acidic residues. The span at 2395 to 2411 (PQAPEPTATAPPKPPEL) shows a compositional bias: pro residues. The segment at 2441 to 2461 (YLCRQCKMAFDGEAPATAHQR) adopts a C2H2-type 12; degenerate zinc-finger fold. A C2H2-type 13 zinc finger spans residues 2485–2509 (YHCLACEVLLSGREALASHLRSSAH). Disordered regions lie at residues 2506 to 2525 (SSAH…ITVT) and 2540 to 2562 (EEAR…LLAL). Over residues 2553–2562 (TTTTSTLLAL) the composition is skewed to low complexity.

In terms of tissue distribution, expressed in brain (at protein level). Expressed at the highest levels in the pyramidal cell layer of the hippocampus, the suprachiasmatic nucleus, laterodorsal thalamic nucleus, lateral geniculate nucleus, substantia nigra pars compacta, and magnocellular part of the red nucleus (at protein level). Highly expressed in dorsal root ganglia. Expressed at lower levels in kidney, stomach, liver, heart and testis.

Its subcellular location is the nucleus. Its function is as follows. Transcriptional regulator that is critical for the regulation of pain perception and processing of noxious stimuli. The polypeptide is Zinc finger homeobox protein 2 (Mus musculus (Mouse)).